Here is a 311-residue protein sequence, read N- to C-terminus: Meteorin-like protein (311 aa).

The span at 1–13 (MRGAARAAWGRAG) shows a compositional bias: low complexity. The segment at 1-24 (MRGAARAAWGRAGQPWPRPPAPGP) is disordered. An N-terminal signal peptide occupies residues 1-45 (MRGAARAAWGRAGQPWPRPPAPGPPPPPLPLLLLLLAGLLGGAGA). Cystine bridges form between cysteine 52-cysteine 75, cysteine 107-cysteine 143, cysteine 188-cysteine 260, cysteine 191-cysteine 284, and cysteine 201-cysteine 306.

Belongs to the meteorin family. Highly expressed in the skeletal muscle, in subcutaneous adipose tissue, epididymal white adipose tissue depots and heart. Also expressed in brown adipose tissues and kidney.

Its subcellular location is the secreted. Its function is as follows. Hormone induced following exercise or cold exposure that promotes energy expenditure. Induced either in the skeletal muscle after exercise or in adipose tissue following cold exposure and is present in the circulation. Able to stimulate energy expenditure associated with the browning of the white fat depots and improves glucose tolerance. Does not promote an increase in a thermogenic gene program via direct action on adipocytes, but acts by stimulating several immune cell subtypes to enter the adipose tissue and activate their prothermogenic actions. Stimulates an eosinophil-dependent increase in IL4 expression and promotes alternative activation of adipose tissue macrophages, which are required for the increased expression of the thermogenic and anti-inflammatory gene programs in fat. Required for some cold-induced thermogenic responses, suggesting a role in metabolic adaptations to cold temperatures. The protein is Meteorin-like protein (METRNL) of Homo sapiens (Human).